The primary structure comprises 265 residues: Apolipoprotein A-I (265 aa).

The first 18 residues, 1 to 18 (MKAVLLTLAVLFLTGSQA), serve as a signal peptide directing secretion. 2 consecutive repeat copies span residues 67-88 (LKLLDNWDSLTSTFAKVREQLG) and 89-110 (PVTQEFWDNLEKETESLRQEMN). A 10 X approximate tandem repeats region spans residues 67-265 (LKLLDNWDSL…DEASKKLNAQ (199 aa)). Methionine sulfoxide is present on Met109. Residues 111 to 121 (KDLEEVKQKVQ) form a 3; half-length repeat. A run of 5 repeats spans residues 122–142 (PYLDEFQKKWQEELQIYRQKV), 144–165 (PLGEELREGARQKVQELQDKLT), 166–187 (PLAEEMRDRARSHVETLRQQLA), 188–209 (PYSDDLRQRMAARFEMLKAGGG), and 210–230 (SLAEYHAKASEQLRALGEKAK). One copy of the 9; half-length repeat lies at 231-241 (PALEDLRQGLV). The stretch at 242–265 (PVLESLKVSILAAIDEASKKLNAQ) is repeat 10.

Belongs to the apolipoprotein A1/A4/E family. In terms of assembly, homodimer. Interacts with APOA1BP and CLU. Component of a sperm activating protein complex (SPAP), consisting of APOA1, an immunoglobulin heavy chain, an immunoglobulin light chain and albumin. Interacts with NDRG1. Interacts with SCGB3A2. Interacts with NAXE and YJEFN3. Post-translationally, glycosylated. Palmitoylated. In terms of processing, phosphorylation sites are present in the extracellular medium. Major protein of plasma HDL, also found in chylomicrons.

The protein localises to the secreted. Participates in the reverse transport of cholesterol from tissues to the liver for excretion by promoting cholesterol efflux from tissues and by acting as a cofactor for the lecithin cholesterol acyltransferase (LCAT). As part of the SPAP complex, activates spermatozoa motility. The chain is Apolipoprotein A-I (APOA1) from Tursiops truncatus (Atlantic bottle-nosed dolphin).